We begin with the raw amino-acid sequence, 794 residues long: Protocadherin beta-6 (794 aa).

The signal sequence occupies residues 1 to 27 (MMQTKVQNKKRQVAFFILLMLWGEVGS). Residues 28 to 688 (ESIQYSVLEE…AQADSLTVYL (661 aa)) are Extracellular-facing. 5 consecutive Cadherin domains span residues 34–132 (VLEE…APEF), 137–241 (MLLK…VPEF), 246–345 (YEAQ…APEL), 350–449 (FISL…APAF), and 454–559 (YTLF…SPFV). A glycan (N-linked (GlcNAc...) asparagine) is linked at asparagine 46. Cysteine 95 and cysteine 101 are disulfide-bonded. The N-linked (GlcNAc...) asparagine glycan is linked to asparagine 183. An N-linked (GlcNAc...) asparagine glycan is attached at asparagine 416. N-linked (GlcNAc...) asparagine glycosylation is present at asparagine 565. The Cadherin 6 domain occupies 566–669 (GSAPCTELVP…LVDGFSQPYL (104 aa)). A helical membrane pass occupies residues 689 to 709 (VVALASVSSLFLFSVLLFVAV). The Cytoplasmic portion of the chain corresponds to 710 to 794 (RLCRRSRAAS…PTSRNSFPFS (85 aa)). The tract at residues 773-794 (PPQGTEREMEETPTSRNSFPFS) is disordered. Residues 784–794 (TPTSRNSFPFS) show a composition bias toward polar residues.

As to quaternary structure, forms homodimers in trans (molecules expressed by two different cells). Forms promiscuous heterodimers in cis (at the plasma membrane of the same cell) with other protocadherins.

The protein resides in the cell membrane. Functionally, calcium-dependent cell-adhesion protein involved in cells self-recognition and non-self discrimination. Thereby, it is involved in the establishment and maintenance of specific neuronal connections in the brain. The sequence is that of Protocadherin beta-6 from Homo sapiens (Human).